The sequence spans 81 residues: U-poneritoxin(01)-Om6a (81 aa).

A signal peptide spans 1-21 (MRRSYVLLAFAIVLIISIISA). A propeptide spanning residues 22-43 (QVEADASSDAFADAVADAVADP) is cleaved from the precursor. Ala79 carries the alanine amide modification.

The protein belongs to the formicidae venom precursor-01 superfamily. In terms of processing, truncated sequences of this peptide have also been found in the venom. It is possible they have been cleaved in the venom. As to expression, expressed by the venom gland.

It is found in the secreted. Cationic amphipathic alpha-helical peptide with antimicrobial activities against E.coli (MIC=3.1), and S.aureus (MIC=3.1 uM). Also shows histamine-releasing activity (33.6% at 10 uM). Does not have activity against S.cerevisiae. Does not show hemolytic activity, even at 50 uM. The chain is U-poneritoxin(01)-Om6a from Odontomachus monticola (Trap-jaw ant).